The primary structure comprises 1373 residues: DNA-directed RNA polymerase subunit beta (1373 aa).

The protein belongs to the RNA polymerase beta chain family. As to quaternary structure, the RNAP catalytic core consists of 2 alpha, 1 beta, 1 beta' and 1 omega subunit. When a sigma factor is associated with the core the holoenzyme is formed, which can initiate transcription.

The enzyme catalyses RNA(n) + a ribonucleoside 5'-triphosphate = RNA(n+1) + diphosphate. Functionally, DNA-dependent RNA polymerase catalyzes the transcription of DNA into RNA using the four ribonucleoside triphosphates as substrates. This Lawsonia intracellularis (strain PHE/MN1-00) protein is DNA-directed RNA polymerase subunit beta.